Consider the following 280-residue polypeptide: Tryptophan synthase alpha chain (280 aa).

Residues glutamate 50 and aspartate 61 each act as proton acceptor in the active site.

This sequence belongs to the TrpA family. In terms of assembly, tetramer of two alpha and two beta chains.

It carries out the reaction (1S,2R)-1-C-(indol-3-yl)glycerol 3-phosphate + L-serine = D-glyceraldehyde 3-phosphate + L-tryptophan + H2O. It functions in the pathway amino-acid biosynthesis; L-tryptophan biosynthesis; L-tryptophan from chorismate: step 5/5. Functionally, the alpha subunit is responsible for the aldol cleavage of indoleglycerol phosphate to indole and glyceraldehyde 3-phosphate. This is Tryptophan synthase alpha chain from Methylorubrum extorquens (strain PA1) (Methylobacterium extorquens).